A 446-amino-acid chain; its full sequence is 3-phosphoshikimate 1-carboxyvinyltransferase (446 aa).

The 3-phosphoshikimate site is built by Lys-35, Ser-36, and Arg-40. Position 35 (Lys-35) interacts with phosphoenolpyruvate. Residues Gly-108 and Arg-137 each contribute to the phosphoenolpyruvate site. Residues Ser-182, Gln-184, Asp-332, and Lys-359 each coordinate 3-phosphoshikimate. Residue Gln-184 coordinates phosphoenolpyruvate. Asp-332 functions as the Proton acceptor in the catalytic mechanism. Residues Arg-363 and Arg-405 each coordinate phosphoenolpyruvate.

Belongs to the EPSP synthase family. In terms of assembly, monomer.

The protein resides in the cytoplasm. It catalyses the reaction 3-phosphoshikimate + phosphoenolpyruvate = 5-O-(1-carboxyvinyl)-3-phosphoshikimate + phosphate. It participates in metabolic intermediate biosynthesis; chorismate biosynthesis; chorismate from D-erythrose 4-phosphate and phosphoenolpyruvate: step 6/7. Its function is as follows. Catalyzes the transfer of the enolpyruvyl moiety of phosphoenolpyruvate (PEP) to the 5-hydroxyl of shikimate-3-phosphate (S3P) to produce enolpyruvyl shikimate-3-phosphate and inorganic phosphate. The sequence is that of 3-phosphoshikimate 1-carboxyvinyltransferase from Acaryochloris marina (strain MBIC 11017).